The primary structure comprises 194 residues: Large ribosomal subunit protein eL15 (194 aa).

Positions 164–194 (SAGKKGRGLRNKGKGAEKIRPSIRANEGKGK) are disordered. Basic residues predominate over residues 167 to 176 (KKGRGLRNKG). Residues 177–194 (KGAEKIRPSIRANEGKGK) are compositionally biased toward basic and acidic residues.

Belongs to the eukaryotic ribosomal protein eL15 family.

The protein is Large ribosomal subunit protein eL15 (rpl15e) of Pyrococcus abyssi (strain GE5 / Orsay).